The chain runs to 213 residues: T-cell surface glycoprotein CD8 beta chain (213 aa).

The first 21 residues, 1–21 (MQPWLWLVFSMKLAALWSSSA), serve as a signal peptide directing secretion. Residues 22-133 (LIQTPSSLLV…KMVFGTGTKL (112 aa)) enclose the Ig-like V-type domain. The Extracellular segment spans residues 22–175 (LIQTPSSLLV…QKGLTCSLTT (154 aa)). Residue asparagine 34 is glycosylated (N-linked (GlcNAc...) asparagine). Cysteine 41 and cysteine 117 form a disulfide bridge. A helical membrane pass occupies residues 176-196 (LSLLVVCILLLLAFLGVAVYF). At 197 to 213 (YCVRRRARIHFMKQFHK) the chain is on the cytoplasmic side.

Forms disulfide-linked heterodimers with CD8A at the cell surface. Interacts with CD3D; this interaction couples TCR-CD3 with CD8. Interacts with LCK. Post-translationally, palmitoylated at the cytoplasmic tail and thereby targets the heterodimer CD8A/CD8B to lipid rafts unlike CD8A homodimers.

The protein resides in the membrane. Its function is as follows. Integral membrane glycoprotein that plays an essential role in the immune response and serves multiple functions in responses against both external and internal offenses. In T-cells, functions primarily as a coreceptor for MHC class I molecule:peptide complex. The antigens presented by class I peptides are derived from cytosolic proteins while class II derived from extracellular proteins. Interacts simultaneously with the T-cell receptor (TCR) and the MHC class I proteins presented by antigen presenting cells (APCs). In turn, recruits the Src kinase LCK to the vicinity of the TCR-CD3 complex. A palmitoylation site in the cytoplasmic tail of CD8B chain contributes to partitioning of CD8 into the plasma membrane lipid rafts where signaling proteins are enriched. Once LCK recruited, it initiates different intracellular signaling pathways by phosphorylating various substrates ultimately leading to lymphokine production, motility, adhesion and activation of cytotoxic T-lymphocytes (CTLs). Additionally, plays a critical role in thymic selection of CD8+ T-cells. The chain is T-cell surface glycoprotein CD8 beta chain (Cd8b) from Mus musculus (Mouse).